A 220-amino-acid polypeptide reads, in one-letter code: Ripening-related protein grip22 (220 aa).

A signal peptide spans 1–27 (MAKSALVWLASVCLVFNILSLPFLALG).

This sequence belongs to the kiwellin family. Expressed in ripening fruits.

The protein localises to the secreted. The polypeptide is Ripening-related protein grip22 (grip22) (Vitis vinifera (Grape)).